We begin with the raw amino-acid sequence, 91 residues long: MNTTPIRHSGLQKAVLSLYRSFLRVSNKKEMDNPSSSISNYIKTQFRLKATTIQKRDINKIESLLVKGKRQLEQIQDPEFSGFAVFTPKSK.

It belongs to the complex I LYR family. SDHAF1 subfamily. Interacts with the iron-sulfur protein subunit within the SDH catalytic dimer.

The protein resides in the mitochondrion matrix. Its function is as follows. Plays an essential role in the assembly of succinate dehydrogenase (SDH), an enzyme complex (also referred to as respiratory complex II) that is a component of both the tricarboxylic acid (TCA) cycle and the mitochondrial electron transport chain, and which couples the oxidation of succinate to fumarate with the reduction of ubiquinone (coenzyme Q) to ubiquinol. Promotes maturation of the iron-sulfur protein subunit of the SDH catalytic dimer, protecting it from the deleterious effects of oxidants. May act together with SDHAF3. This chain is Succinate dehydrogenase assembly factor 1A, mitochondrial, found in Dictyostelium discoideum (Social amoeba).